A 934-amino-acid polypeptide reads, in one-letter code: Isoleucine--tRNA ligase (934 aa).

The 'HIGH' region signature appears at 58 to 68 (PYANGEIHIGH). E559 contacts L-isoleucyl-5'-AMP. Residues 600 to 604 (KMSKS) carry the 'KMSKS' region motif. K603 contacts ATP. C897, C900, C917, and C920 together coordinate Zn(2+).

It belongs to the class-I aminoacyl-tRNA synthetase family. IleS type 1 subfamily. As to quaternary structure, monomer. Requires Zn(2+) as cofactor.

The protein localises to the cytoplasm. The catalysed reaction is tRNA(Ile) + L-isoleucine + ATP = L-isoleucyl-tRNA(Ile) + AMP + diphosphate. Its function is as follows. Catalyzes the attachment of isoleucine to tRNA(Ile). As IleRS can inadvertently accommodate and process structurally similar amino acids such as valine, to avoid such errors it has two additional distinct tRNA(Ile)-dependent editing activities. One activity is designated as 'pretransfer' editing and involves the hydrolysis of activated Val-AMP. The other activity is designated 'posttransfer' editing and involves deacylation of mischarged Val-tRNA(Ile). This chain is Isoleucine--tRNA ligase, found in Teredinibacter turnerae (strain ATCC 39867 / T7901).